We begin with the raw amino-acid sequence, 572 residues long: AAA ATPase forming ring-shaped complexes (572 aa).

The span at 1–18 (MTTASQQTSSHSTASSTS) shows a compositional bias: low complexity. A disordered region spans residues 1 to 30 (MTTASQQTSSHSTASSTSRKGNNNDATPSL). A coiled-coil region spans residues 42–70 (TRNAKLVEMLKASRDKLDALNEQIRALSD). 258-263 (GCGKTL) is an ATP binding site. The interval 543–572 (VAHHNRKTTTETEATEPEGTDSGKGHTDAS) is disordered. Basic and acidic residues predominate over residues 563-572 (DSGKGHTDAS).

The protein belongs to the AAA ATPase family. In terms of assembly, homohexamer. Assembles into a hexameric ring structure.

This Corynebacterium kroppenstedtii (strain DSM 44385 / JCM 11950 / CIP 105744 / CCUG 35717) protein is AAA ATPase forming ring-shaped complexes.